The following is an 831-amino-acid chain: Periplasmic nitrate reductase (831 aa).

The tat-type signal signal peptide spans 1 to 35 (MTISDSRRTFLKASAAAATASAAGIPLANGTAAEA). The 4Fe-4S Mo/W bis-MGD-type domain occupies 42–98 (IRWDKAACRFCGTGCSVLVGTKEGRVVATQGDPDAPVNRGLNCIKGYFLSKIMYGED). [4Fe-4S] cluster is bound by residues cysteine 49, cysteine 52, cysteine 56, and cysteine 84. Residues lysine 86, glutamine 153, asparagine 178, cysteine 182, 215-222 (WGSNMAEM), 246-250 (STYEH), 265-267 (QTD), methionine 375, glutamine 379, asparagine 485, 511-512 (SD), lysine 534, aspartate 561, and 721-730 (TGRVLEHWHS) contribute to the Mo-bis(molybdopterin guanine dinucleotide) site. Tryptophan 797 contacts substrate. Asparagine 805 and lysine 822 together coordinate Mo-bis(molybdopterin guanine dinucleotide).

The protein belongs to the prokaryotic molybdopterin-containing oxidoreductase family. NasA/NapA/NarB subfamily. Component of the periplasmic nitrate reductase NapAB complex composed of NapA and NapB. Requires [4Fe-4S] cluster as cofactor. Mo-bis(molybdopterin guanine dinucleotide) serves as cofactor. Post-translationally, predicted to be exported by the Tat system. The position of the signal peptide cleavage has not been experimentally proven.

It localises to the periplasm. The enzyme catalyses 2 Fe(II)-[cytochrome] + nitrate + 2 H(+) = 2 Fe(III)-[cytochrome] + nitrite + H2O. Functionally, catalytic subunit of the periplasmic nitrate reductase complex NapAB. Receives electrons from NapB and catalyzes the reduction of nitrate to nitrite. The protein is Periplasmic nitrate reductase of Dinoroseobacter shibae (strain DSM 16493 / NCIMB 14021 / DFL 12).